The following is a 472-amino-acid chain: 2-amino-4-ketopentanoate thiolase beta subunit (472 aa).

Lysine 102 is subject to N6-(pyridoxal phosphate)lysine. Pyridoxal 5'-phosphate contacts are provided by residues asparagine 128 and alanine 238–asparagine 242.

Belongs to the threonine synthase family. Heterodimer with OrtA. It depends on pyridoxal 5'-phosphate as a cofactor.

The catalysed reaction is D-alanine + acetyl-CoA = (2R)-2-amino-4-oxopentanoate + CoA. In terms of biological role, involved in the ornithine fermentation pathway. Catalyzes the thiolytic cleavage of 2-amino-4-ketopentanoate (AKP) with coenzyme A (CoA) to form acetyl-CoA and alanine. It is strictly specific for AKP. The chain is 2-amino-4-ketopentanoate thiolase beta subunit from Unknown prokaryotic organism.